The following is a 376-amino-acid chain: tRNA-specific 2-thiouridylase MnmA (376 aa).

ATP contacts are provided by residues 16 to 23 (AMSGGVDS) and Leu42. Cys111 serves as the catalytic Nucleophile. Cysteines 111 and 210 form a disulfide. Residue Gly135 coordinates ATP. Positions 158 to 160 (KDQ) are interaction with tRNA. The active-site Cysteine persulfide intermediate is the Cys210.

It belongs to the MnmA/TRMU family.

The protein resides in the cytoplasm. It carries out the reaction S-sulfanyl-L-cysteinyl-[protein] + uridine(34) in tRNA + AH2 + ATP = 2-thiouridine(34) in tRNA + L-cysteinyl-[protein] + A + AMP + diphosphate + H(+). Its function is as follows. Catalyzes the 2-thiolation of uridine at the wobble position (U34) of tRNA, leading to the formation of s(2)U34. This chain is tRNA-specific 2-thiouridylase MnmA, found in Streptomyces coelicolor (strain ATCC BAA-471 / A3(2) / M145).